Consider the following 968-residue polypeptide: RNA polymerase-associated protein RapA (968 aa).

The Helicase ATP-binding domain maps to 163–332; that stretch reads EVGRRYAPRV…FARLRLLDPD (170 aa). 176–183 contributes to the ATP binding site; that stretch reads DEVGLGKT. A DEAH box motif is present at residues 278 to 281; that stretch reads DEAH. Residues 491 to 643 form the Helicase C-terminal domain; it reads RVDWLIAFLK…ELTCPSGHVL (153 aa).

The protein belongs to the SNF2/RAD54 helicase family. RapA subfamily. In terms of assembly, interacts with the RNAP. Has a higher affinity for the core RNAP than for the holoenzyme. Its ATPase activity is stimulated by binding to RNAP.

In terms of biological role, transcription regulator that activates transcription by stimulating RNA polymerase (RNAP) recycling in case of stress conditions such as supercoiled DNA or high salt concentrations. Probably acts by releasing the RNAP, when it is trapped or immobilized on tightly supercoiled DNA. Does not activate transcription on linear DNA. Probably not involved in DNA repair. The protein is RNA polymerase-associated protein RapA of Shewanella sp. (strain W3-18-1).